We begin with the raw amino-acid sequence, 301 residues long: ATP synthase gamma chain (301 aa).

It belongs to the ATPase gamma chain family. In terms of assembly, F-type ATPases have 2 components, CF(1) - the catalytic core - and CF(0) - the membrane proton channel. CF(1) has five subunits: alpha(3), beta(3), gamma(1), delta(1), epsilon(1). CF(0) has three main subunits: a, b and c.

The protein resides in the cell inner membrane. In terms of biological role, produces ATP from ADP in the presence of a proton gradient across the membrane. The gamma chain is believed to be important in regulating ATPase activity and the flow of protons through the CF(0) complex. The chain is ATP synthase gamma chain from Bordetella pertussis (strain Tohama I / ATCC BAA-589 / NCTC 13251).